Reading from the N-terminus, the 514-residue chain is ATP synthase subunit alpha (514 aa).

170-177 is an ATP binding site; that stretch reads GDRQTGKT.

Belongs to the ATPase alpha/beta chains family. In terms of assembly, F-type ATPases have 2 components, CF(1) - the catalytic core - and CF(0) - the membrane proton channel. CF(1) has five subunits: alpha(3), beta(3), gamma(1), delta(1), epsilon(1). CF(0) has three main subunits: a(1), b(2) and c(9-12). The alpha and beta chains form an alternating ring which encloses part of the gamma chain. CF(1) is attached to CF(0) by a central stalk formed by the gamma and epsilon chains, while a peripheral stalk is formed by the delta and b chains.

Its subcellular location is the cell inner membrane. It catalyses the reaction ATP + H2O + 4 H(+)(in) = ADP + phosphate + 5 H(+)(out). Functionally, produces ATP from ADP in the presence of a proton gradient across the membrane. The alpha chain is a regulatory subunit. The polypeptide is ATP synthase subunit alpha (Psychrobacter sp. (strain PRwf-1)).